Here is a 229-residue protein sequence, read N- to C-terminus: Orotidine 5'-phosphate decarboxylase (229 aa).

Residues D11, K33, D60–T69, T119, R180, Q189, G209, and R210 contribute to the substrate site. K62 serves as the catalytic Proton donor.

It belongs to the OMP decarboxylase family. Type 1 subfamily. Homodimer.

The catalysed reaction is orotidine 5'-phosphate + H(+) = UMP + CO2. The protein operates within pyrimidine metabolism; UMP biosynthesis via de novo pathway; UMP from orotate: step 2/2. Catalyzes the decarboxylation of orotidine 5'-monophosphate (OMP) to uridine 5'-monophosphate (UMP). This Dichelobacter nodosus (strain VCS1703A) protein is Orotidine 5'-phosphate decarboxylase.